The sequence spans 458 residues: tRNA modification GTPase MnmE (458 aa).

3 residues coordinate (6S)-5-formyl-5,6,7,8-tetrahydrofolate: Arg-26, Glu-88, and Arg-127. Residues 224 to 378 enclose the TrmE-type G domain; the sequence is GLSTAIIGRP…IEDRINQLFF (155 aa). Residue Asn-234 participates in K(+) binding. GTP contacts are provided by residues 234–239, 253–259, and 278–281; these read NVGKSS, TDIAGTT, and DTAG. Ser-238 contacts Mg(2+). Residues Thr-253, Ile-255, and Thr-258 each coordinate K(+). A Mg(2+)-binding site is contributed by Thr-259. Lys-458 is a (6S)-5-formyl-5,6,7,8-tetrahydrofolate binding site.

This sequence belongs to the TRAFAC class TrmE-Era-EngA-EngB-Septin-like GTPase superfamily. TrmE GTPase family. In terms of assembly, homodimer. Heterotetramer of two MnmE and two MnmG subunits. K(+) is required as a cofactor.

Its subcellular location is the cytoplasm. Exhibits a very high intrinsic GTPase hydrolysis rate. Involved in the addition of a carboxymethylaminomethyl (cmnm) group at the wobble position (U34) of certain tRNAs, forming tRNA-cmnm(5)s(2)U34. The sequence is that of tRNA modification GTPase MnmE from Streptococcus pyogenes serotype M18 (strain MGAS8232).